We begin with the raw amino-acid sequence, 612 residues long: E3 ubiquitin-protein ligase synoviolin (612 aa).

The Cytoplasmic portion of the chain corresponds to 1–4 (MFRT). The involved in FAM8A1 interaction stretch occupies residues 1–251 (MFRTAVMMAA…LFAIRPMYLA (251 aa)). The helical transmembrane segment at 5 to 25 (AVMMAASLALTGAVVAHAYYL) threads the bilayer. Residues 21 to 42 (HAYYLKHQFYPTVVYLTKSSPS) form an interaction with SEL1L region. Residues 26–41 (KHQFYPTVVYLTKSSP) are Lumenal-facing. A helical membrane pass occupies residues 42 to 62 (SMAVLYIQAFVLVFLLGKVMG). The Cytoplasmic portion of the chain corresponds to 63–98 (KVFFGQLRAAEMEHLLERSWYAVTETCLAFTVFRDD). Residues 99–119 (FSPRFVALFTLLLFLKCFHWL) traverse the membrane as a helical segment. The Lumenal portion of the chain corresponds to 120-140 (AEDRVDFMERSPNISWLFHCR). The chain crosses the membrane as a helical span at residues 141–161 (IVSLMFLLGILDFLFVSHAYH). Residues 162–169 (SILTRGAS) lie on the Cytoplasmic side of the membrane. A helical transmembrane segment spans residues 170 to 190 (VQLVFGFEYAILMTMVLTIFI). Topologically, residues 191–224 (KYVLHSVDLQSENPWDNKAVYMLYTELFTGFIKV) are lumenal. The helical transmembrane segment at 225 to 245 (LLYMAFMTIMIKVHTFPLFAI) threads the bilayer. Residues 236 to 270 (KVHTFPLFAIRPMYLAMRQFKKAVTDAIMSRRAIR) are interaction with p53/TP53. At 246–612 (RPMYLAMRQF…LQKLESPVAH (367 aa)) the chain is on the cytoplasmic side. The Zn(2+) site is built by Cys-291, Cys-294, Cys-307, His-309, His-312, Cys-315, Cys-326, and Cys-329. The RING-type; atypical zinc-finger motif lies at 291 to 330 (CIICREEMVTGAKRLPCNHIFHTSCLRSWFQRQQTCPTCR). 2 disordered regions span residues 337–375 (SLPA…GLLP) and 393–449 (PVPP…PGFP). 2 stretches are compositionally biased toward pro residues: residues 341-375 (QSPP…GLLP) and 393-409 (PVPP…PPPT). Low complexity predominate over residues 416-434 (PSGAATTTAAGTSTSAPAP). Residues 435–449 (GSVPGPEAGPAPGFP) are compositionally biased toward pro residues. Residues 474–529 (GFAGLTPEELRALEGHERQHLEARLQSLRNIHTLLDAAMLQINQYLTVLASLGPPR) are HAF-H domain; necessary to form higher-order Hrd1 complexes. A disordered region spans residues 530–612 (PATSVNPTEE…LQKLESPVAH (83 aa)). Over residues 539 to 559 (ETASTVVSAAPSTSAPSSEAP) the composition is skewed to low complexity. Residues 560–570 (TPSPGASPPIP) show a composition bias toward pro residues. A compositionally biased stretch (acidic residues) spans 586–595 (ELPEDGEPDA). Position 608 is a phosphoserine (Ser-608).

Belongs to the HRD1 family. In terms of assembly, homodimer. Interacts with p53/TP53. Interacts with HTT. Component of the HRD1 complex, which comprises at least SYNV1/HRD1, DERL1/2, FAM8A1, HERPUD1/HERP, OS9, SEL1L and UBE2J1. FAM8A1 is stabilized by interaction with SYNV1, which prevents its proteasomal degradation. OS9 and UBE2J1 recruitment to the complex may be mediated by SEL1L. SYNV1 assembles with SEL1L and FAM8A1 through its transmembrane domains, but interaction with its cytoplasmic domain is required to confer stability to FAM8A1 and enhance recruitment of HERPUD1. The HRD1 complex also associates with VIMP and may transfer misfolded proteins from the endoplasmic reticulum to VCP. May form a complex with ERLEC1; HSPA5; OS9 and SEL1L. Interacts with VCP. Interacts with UBXN6. Interacts with BAG6. Interacts with NFE2L1. Interacts (via N-terminus) with components of the pre-B cell receptor, including IGLL1 and VPREB1A. Interacts with CREB3L3; this interaction leads to CREB3L3 ubiquitination and proteasomal degradation. Auto-ubiquitinated. Deubiquitinated by USP19. Widely expressed, with highest levels in bone, spleen, lung and testis. In the brain, present in neurons but not in glial cells. Up-regulated in synovial tissues from mice with collagen-induced arthritis (at protein level). Expressed in the liver.

The protein resides in the endoplasmic reticulum membrane. It carries out the reaction S-ubiquitinyl-[E2 ubiquitin-conjugating enzyme]-L-cysteine + [acceptor protein]-L-lysine = [E2 ubiquitin-conjugating enzyme]-L-cysteine + N(6)-ubiquitinyl-[acceptor protein]-L-lysine.. Its pathway is protein modification; protein ubiquitination. Functionally, E3 ubiquitin-protein ligase which accepts ubiquitin specifically from endoplasmic reticulum-associated UBC7 E2 ligase and transfers it to substrates, promoting their degradation. Component of the endoplasmic reticulum quality control (ERQC) system also called ER-associated degradation (ERAD) involved in ubiquitin-dependent degradation of misfolded endoplasmic reticulum proteins. Also promotes the degradation of normal but naturally short-lived proteins such as SGK. Protects cells from ER stress-induced apoptosis. Sequesters p53/TP53 in the cytoplasm and promotes its degradation, thereby negatively regulating its biological function in transcription, cell cycle regulation and apoptosis. Required for embryogenesis. Mediates the ubiquitination and subsequent degradation of cytoplasmic NFE2L1. During the early stage of B cell development, required for degradation of the pre-B cell receptor (pre-BCR) complex, hence supporting further differentiation into mature B cells. This Mus musculus (Mouse) protein is E3 ubiquitin-protein ligase synoviolin (Syvn1).